The primary structure comprises 137 residues: Small ribosomal subunit protein uS12 (137 aa).

Disordered stretches follow at residues 1-21 (MPTINQLVRKPRKSKVEKSKS) and 33-57 (KVQTNVSSPQKRGVATRVGTMTPRK). D102 carries the post-translational modification 3-methylthioaspartic acid.

Belongs to the universal ribosomal protein uS12 family. As to quaternary structure, part of the 30S ribosomal subunit. Contacts proteins S8 and S17. May interact with IF1 in the 30S initiation complex.

Its function is as follows. With S4 and S5 plays an important role in translational accuracy. In terms of biological role, interacts with and stabilizes bases of the 16S rRNA that are involved in tRNA selection in the A site and with the mRNA backbone. Located at the interface of the 30S and 50S subunits, it traverses the body of the 30S subunit contacting proteins on the other side and probably holding the rRNA structure together. The combined cluster of proteins S8, S12 and S17 appears to hold together the shoulder and platform of the 30S subunit. The chain is Small ribosomal subunit protein uS12 from Streptococcus pneumoniae (strain ATCC 700669 / Spain 23F-1).